We begin with the raw amino-acid sequence, 70 residues long: Large ribosomal subunit protein bL31 (70 aa).

Zn(2+)-binding residues include C16, C18, C37, and C40.

It belongs to the bacterial ribosomal protein bL31 family. Type A subfamily. Part of the 50S ribosomal subunit. It depends on Zn(2+) as a cofactor.

Binds the 23S rRNA. This is Large ribosomal subunit protein bL31 from Erwinia tasmaniensis (strain DSM 17950 / CFBP 7177 / CIP 109463 / NCPPB 4357 / Et1/99).